The sequence spans 197 residues: Probable GTP-binding protein EngB (197 aa).

An EngB-type G domain is found at glycine 22–glycine 195. GTP-binding positions include glycine 30–serine 37, glycine 57–threonine 61, aspartate 75–glycine 78, threonine 142–aspartate 145, and phenylalanine 174–alanine 176. Mg(2+) is bound by residues serine 37 and threonine 59.

This sequence belongs to the TRAFAC class TrmE-Era-EngA-EngB-Septin-like GTPase superfamily. EngB GTPase family. It depends on Mg(2+) as a cofactor.

In terms of biological role, necessary for normal cell division and for the maintenance of normal septation. This is Probable GTP-binding protein EngB from Levilactobacillus brevis (strain ATCC 367 / BCRC 12310 / CIP 105137 / JCM 1170 / LMG 11437 / NCIMB 947 / NCTC 947) (Lactobacillus brevis).